Reading from the N-terminus, the 314-residue chain is DNA-directed RNA polymerase subunit alpha (314 aa).

The segment at 1 to 228 (MIEIEKPRIE…EHLNIFVGLT (228 aa)) is alpha N-terminal domain (alpha-NTD). The tract at residues 245-314 (KEKVLEMSIE…DLGLGLRKED (70 aa)) is alpha C-terminal domain (alpha-CTD).

It belongs to the RNA polymerase alpha chain family. As to quaternary structure, homodimer. The RNAP catalytic core consists of 2 alpha, 1 beta, 1 beta' and 1 omega subunit. When a sigma factor is associated with the core the holoenzyme is formed, which can initiate transcription.

It carries out the reaction RNA(n) + a ribonucleoside 5'-triphosphate = RNA(n+1) + diphosphate. Functionally, DNA-dependent RNA polymerase catalyzes the transcription of DNA into RNA using the four ribonucleoside triphosphates as substrates. This is DNA-directed RNA polymerase subunit alpha from Staphylococcus saprophyticus subsp. saprophyticus (strain ATCC 15305 / DSM 20229 / NCIMB 8711 / NCTC 7292 / S-41).